Reading from the N-terminus, the 331-residue chain is MSSGRTVTLNTGYKIPQIGYGTWQAAPGEVGAGVFEALKVGYRHLDLAKVYGNQKEVGEGIKKALAEVPGLKREDIFITSKLWNNSHKPEDVEPALDDTLAELGLDYLDLYLIHWPVAFAPGADLFPKSEDGSEVQLNQNVSIVQTWKAMTELPKSKVRSVGVSNFTIEHLDAVIEATGVVPAVNQIERHPRLPNQPLIDYCAKKGIIITAYSAFGNNTKGLPLLVSSDEVKAVADNLSKKQGKTVTPAQVILAWSQIGGHTVIPKSVTKARIAENFQEVELDDEAIAALNKLGEKPQRFNIPYTYKPRWNINLFNTEEEKAAAHTAVIKL.

Tyrosine 51 serves as the catalytic Proton donor. A substrate-binding site is contributed by histidine 114. 213 to 276 serves as a coordination point for NADP(+); it reads SAFGNNTKGL…SVTKARIAEN (64 aa).

Belongs to the aldo/keto reductase family.

The catalysed reaction is glycerol + NADP(+) = L-glyceraldehyde + NADPH + H(+). The enzyme catalyses glycerol + NADP(+) = D-glyceraldehyde + NADPH + H(+). It participates in carbohydrate acid metabolism. Mediates the conversion of L-glyceraldehyde to glycerol in D-galacturonate catabolic process. Also able to reduce D-glyceraldehyde. The sequence is that of D/L-glyceraldehyde reductase (gld1) from Hypocrea jecorina (Trichoderma reesei).